The primary structure comprises 85 residues: Large ribosomal subunit protein bL27 (85 aa).

The interval 1-22 is disordered; it reads MAHKKGGGSSRNGRDSNAQRRG.

Belongs to the bacterial ribosomal protein bL27 family.

The sequence is that of Large ribosomal subunit protein bL27 from Sorangium cellulosum (strain So ce56) (Polyangium cellulosum (strain So ce56)).